We begin with the raw amino-acid sequence, 92 residues long: Small ribosomal subunit protein uS19c (92 aa).

This sequence belongs to the universal ribosomal protein uS19 family.

The protein localises to the plastid. It is found in the chloroplast. Its function is as follows. Protein S19 forms a complex with S13 that binds strongly to the 16S ribosomal RNA. The chain is Small ribosomal subunit protein uS19c from Calycanthus floridus var. glaucus (Eastern sweetshrub).